The chain runs to 603 residues: Serine/threonine-protein kinase HAL4/SAT4 (603 aa).

3 stretches are compositionally biased toward polar residues: residues 1-15, 30-60, and 68-85; these read MTGMNDNNAAIPQQT, RSGSRSSRQGKASSNIQPPSNINTNVPSASK, and TPTTATPRVVSNPSNTAG. 3 disordered regions span residues 1–86, 150–171, and 267–301; these read MTGM…TAGV, LSPKFSHHSNSNTAITPAPTPT, and DKYPEGAPTSGALNCPERDIYRSDQKDSKNNTHNI. The segment covering 159 to 171 has biased composition (low complexity); the sequence is NSNTAITPAPTPT. Positions 282–296 are enriched in basic and acidic residues; it reads PERDIYRSDQKDSKN. The Protein kinase domain maps to 316–590; the sequence is GRCQEVLGKG…GKQILNSEWG (275 aa). Residues 322 to 330 and Lys-353 each bind ATP; that span reads LGKGAFGVV. Asp-449 acts as the Proton acceptor in catalysis.

It belongs to the protein kinase superfamily. Ser/Thr protein kinase family.

The catalysed reaction is L-seryl-[protein] + ATP = O-phospho-L-seryl-[protein] + ADP + H(+). The enzyme catalyses L-threonyl-[protein] + ATP = O-phospho-L-threonyl-[protein] + ADP + H(+). In terms of biological role, promotes K(+) uptake, by the potassium transporter TRK1-TRK2, which leads to the subsequent cellular resistance to toxic cations such as Na(+), Li(+) and Ca(2+). The chain is Serine/threonine-protein kinase HAL4/SAT4 (SAT4) from Saccharomyces cerevisiae (strain ATCC 204508 / S288c) (Baker's yeast).